Consider the following 402-residue polypeptide: Multidrug resistance protein MdtG (402 aa).

The next 11 membrane-spanning stretches (helical) occupy residues 14–34, 52–72, 90–110, 113–133, 149–169, 171–191, 219–239, 254–274, 288–308, 318–338, and 376–396; these read LYIV…IMPF, LWTG…APFW, LGMA…QLLI, ALLG…ATQV, AVSG…LYGL, PVFF…LFFV, VICL…VTPI, LAFI…ISAP, VLIF…LVSN, LLGA…LYNI, and AVFY…WISF.

It belongs to the major facilitator superfamily. DHA1 family. MdtG (TC 2.A.1.2.20) subfamily.

The protein resides in the cell inner membrane. This is Multidrug resistance protein MdtG from Proteus mirabilis (strain HI4320).